The following is a 372-amino-acid chain: 4-hydroxy-3-methylbut-2-en-1-yl diphosphate synthase (flavodoxin) (372 aa).

Cys270, Cys273, Cys305, and Glu312 together coordinate [4Fe-4S] cluster.

This sequence belongs to the IspG family. [4Fe-4S] cluster serves as cofactor.

The catalysed reaction is (2E)-4-hydroxy-3-methylbut-2-enyl diphosphate + oxidized [flavodoxin] + H2O + 2 H(+) = 2-C-methyl-D-erythritol 2,4-cyclic diphosphate + reduced [flavodoxin]. It participates in isoprenoid biosynthesis; isopentenyl diphosphate biosynthesis via DXP pathway; isopentenyl diphosphate from 1-deoxy-D-xylulose 5-phosphate: step 5/6. In terms of biological role, converts 2C-methyl-D-erythritol 2,4-cyclodiphosphate (ME-2,4cPP) into 1-hydroxy-2-methyl-2-(E)-butenyl 4-diphosphate. The protein is 4-hydroxy-3-methylbut-2-en-1-yl diphosphate synthase (flavodoxin) of Salmonella typhi.